A 726-amino-acid polypeptide reads, in one-letter code: Catalase-peroxidase 1 (726 aa).

The interval 1–33 is disordered; the sequence is MSTSDDIHNTTATGKCPFHQGGHDQSAGAGTTT. A cross-link (tryptophyl-tyrosyl-methioninium (Trp-Tyr) (with M-252)) is located at residues 105-226; sequence WHGAGTYRSI…LGATEMGLIY (122 aa). Residue H106 is the Proton acceptor of the active site. Positions 226–252 form a cross-link, tryptophyl-tyrosyl-methioninium (Tyr-Met) (with W-105); it reads YVNPEGPDHSGEPLSAAAAIRATFGNM. Position 267 (H267) interacts with heme b.

This sequence belongs to the peroxidase family. Peroxidase/catalase subfamily. Homodimer or homotetramer. Heme b is required as a cofactor. Post-translationally, formation of the three residue Trp-Tyr-Met cross-link is important for the catalase, but not the peroxidase activity of the enzyme.

The catalysed reaction is H2O2 + AH2 = A + 2 H2O. It carries out the reaction 2 H2O2 = O2 + 2 H2O. Bifunctional enzyme with both catalase and broad-spectrum peroxidase activity. This is Catalase-peroxidase 1 from Escherichia coli O157:H7.